A 202-amino-acid chain; its full sequence is Securin (202 aa).

Residues 36–55 are disordered; the sequence is DGRSQVSTPHVGKMFDAPPA. A D-box motif is present at residues 61–64; sequence RKAL. 2 consecutive short sequence motifs (TEK-box) follow at residues 71-73 and 94-96; these read TEK. The SH3-binding signature appears at 163–173; it reads PPSPLKMPPLL. Residue serine 165 is modified to Phosphoserine; by CDK1.

This sequence belongs to the securin family. Interacts with RPS10 and DNAJA1. Interacts with the caspase-like ESPL1, and prevents its protease activity probably by covering its active site. Interacts with TP53 and blocks its activity probably by blocking its binding to DNA. Interacts with the Ku 70 kDa subunit of ds-DNA kinase. Interacts with PTTG1IP. In terms of processing, phosphorylated at Ser-165 by CDK1 during mitosis. Post-translationally, phosphorylated in vitro by ds-DNA kinase. Ubiquitinated through 'Lys-11' linkage of ubiquitin moieties by the anaphase promoting complex (APC) at the onset of anaphase, conducting to its degradation. 'Lys-11'-linked ubiquitination is mediated by the E2 ligase UBE2C/UBCH10.

It is found in the cytoplasm. Its subcellular location is the nucleus. In terms of biological role, regulatory protein, which plays a central role in chromosome stability, in the p53/TP53 pathway, and DNA repair. Probably acts by blocking the action of key proteins. During the mitosis, it blocks Separase/ESPL1 function, preventing the proteolysis of the cohesin complex and the subsequent segregation of the chromosomes. At the onset of anaphase, it is ubiquitinated, conducting to its destruction and to the liberation of ESPL1. Its function is however not limited to a blocking activity, since it is required to activate ESPL1. Negatively regulates the transcriptional activity and related apoptosis activity of TP53. The negative regulation of TP53 may explain the strong transforming capability of the protein when it is overexpressed. May also play a role in DNA repair via its interaction with Ku, possibly by connecting DNA damage-response pathways with sister chromatid separation. This is Securin (PTTG1) from Bos taurus (Bovine).